A 156-amino-acid polypeptide reads, in one-letter code: Rhombotin-1 (156 aa).

2 LIM zinc-binding domains span residues 24-83 (CAGC…RLFG) and 88-147 (CAAC…EGQL).

In terms of tissue distribution, expressed mainly in the central nervous. Low level of expression in other tissues including thymus.

The protein resides in the nucleus. In terms of biological role, may be involved in gene regulation within neural lineage cells potentially by direct DNA binding or by binding to other transcription factors. In Homo sapiens (Human), this protein is Rhombotin-1 (LMO1).